A 281-amino-acid chain; its full sequence is 4-hydroxy-3-methylbut-2-enyl diphosphate reductase (281 aa).

Cys12 provides a ligand contact to [4Fe-4S] cluster. 2 residues coordinate (2E)-4-hydroxy-3-methylbut-2-enyl diphosphate: His41 and His74. His41 and His74 together coordinate dimethylallyl diphosphate. Isopentenyl diphosphate is bound by residues His41 and His74. Cys96 is a [4Fe-4S] cluster binding site. His124 serves as a coordination point for (2E)-4-hydroxy-3-methylbut-2-enyl diphosphate. His124 contributes to the dimethylallyl diphosphate binding site. His124 is a binding site for isopentenyl diphosphate. Catalysis depends on Glu126, which acts as the Proton donor. Thr164 contributes to the (2E)-4-hydroxy-3-methylbut-2-enyl diphosphate binding site. Cys193 contacts [4Fe-4S] cluster. Residues Ser221, Asn223, and Ser265 each coordinate (2E)-4-hydroxy-3-methylbut-2-enyl diphosphate. 3 residues coordinate dimethylallyl diphosphate: Ser221, Asn223, and Ser265. Isopentenyl diphosphate contacts are provided by Ser221, Asn223, and Ser265.

The protein belongs to the IspH family. The cofactor is [4Fe-4S] cluster.

The catalysed reaction is isopentenyl diphosphate + 2 oxidized [2Fe-2S]-[ferredoxin] + H2O = (2E)-4-hydroxy-3-methylbut-2-enyl diphosphate + 2 reduced [2Fe-2S]-[ferredoxin] + 2 H(+). It carries out the reaction dimethylallyl diphosphate + 2 oxidized [2Fe-2S]-[ferredoxin] + H2O = (2E)-4-hydroxy-3-methylbut-2-enyl diphosphate + 2 reduced [2Fe-2S]-[ferredoxin] + 2 H(+). It participates in isoprenoid biosynthesis; dimethylallyl diphosphate biosynthesis; dimethylallyl diphosphate from (2E)-4-hydroxy-3-methylbutenyl diphosphate: step 1/1. It functions in the pathway isoprenoid biosynthesis; isopentenyl diphosphate biosynthesis via DXP pathway; isopentenyl diphosphate from 1-deoxy-D-xylulose 5-phosphate: step 6/6. Functionally, catalyzes the conversion of 1-hydroxy-2-methyl-2-(E)-butenyl 4-diphosphate (HMBPP) into a mixture of isopentenyl diphosphate (IPP) and dimethylallyl diphosphate (DMAPP). Acts in the terminal step of the DOXP/MEP pathway for isoprenoid precursor biosynthesis. The protein is 4-hydroxy-3-methylbut-2-enyl diphosphate reductase of Nitratidesulfovibrio vulgaris (strain DSM 19637 / Miyazaki F) (Desulfovibrio vulgaris).